The following is a 331-amino-acid chain: DNA-directed RNA polymerase subunit alpha (331 aa).

Positions 1 to 226 are alpha N-terminal domain (alpha-NTD); the sequence is MLIAQRPTLT…ELFGLARELN (226 aa). The interval 243–331 is alpha C-terminal domain (alpha-CTD); the sequence is LSSELSMPIE…SYDEDETTTN (89 aa).

The protein belongs to the RNA polymerase alpha chain family. Homodimer. The RNAP catalytic core consists of 2 alpha, 1 beta, 1 beta' and 1 omega subunit. When a sigma factor is associated with the core the holoenzyme is formed, which can initiate transcription.

It carries out the reaction RNA(n) + a ribonucleoside 5'-triphosphate = RNA(n+1) + diphosphate. DNA-dependent RNA polymerase catalyzes the transcription of DNA into RNA using the four ribonucleoside triphosphates as substrates. The protein is DNA-directed RNA polymerase subunit alpha of Clavibacter sepedonicus (Clavibacter michiganensis subsp. sepedonicus).